The primary structure comprises 340 residues: CRISPR-associated protein Cas7 (340 aa).

As to quaternary structure, component of the Cascade-like complex (Cascade I-B), composed of Cas5, Cas6, Cas7 and crRNA.

It is found in the cytoplasm. Functionally, CRISPR (clustered regularly interspaced short palindromic repeat) is an adaptive immune system that provides protection against mobile genetic elements (viruses, transposable elements and conjugative plasmids). CRISPR clusters contain sequences complementary to antecedent mobile elements and target invading nucleic acids. CRISPR clusters are transcribed and processed into CRISPR RNA (crRNA). Plasmid targeted by CRISPR locus P1 transform wild-type cells very poorly. This protein helps process or stabilize pre-crRNA into individual crRNA units, in vivo Cas6 and Cas7 are also required for optimal crRNA processing and/or stability. This is CRISPR-associated protein Cas7 from Haloferax volcanii (strain ATCC 29605 / DSM 3757 / JCM 8879 / NBRC 14742 / NCIMB 2012 / VKM B-1768 / DS2) (Halobacterium volcanii).